A 301-amino-acid chain; its full sequence is Tyrosine recombinase XerC (301 aa).

Positions 1–89 (MGLDGLAAYL…SWRQYCVWLV (89 aa)) constitute a Core-binding (CB) domain. Residues 110 to 290 (RVPKALPQEW…DFDHIARLYD (181 aa)) form the Tyr recombinase domain. Catalysis depends on residues arginine 151, lysine 175, histidine 242, arginine 245, and histidine 268. The active-site O-(3'-phospho-DNA)-tyrosine intermediate is tyrosine 277.

The protein belongs to the 'phage' integrase family. XerC subfamily. Forms a cyclic heterotetrameric complex composed of two molecules of XerC and two molecules of XerD.

The protein localises to the cytoplasm. Site-specific tyrosine recombinase, which acts by catalyzing the cutting and rejoining of the recombining DNA molecules. The XerC-XerD complex is essential to convert dimers of the bacterial chromosome into monomers to permit their segregation at cell division. It also contributes to the segregational stability of plasmids. The sequence is that of Tyrosine recombinase XerC from Neisseria meningitidis serogroup B (strain ATCC BAA-335 / MC58).